Here is a 118-residue protein sequence, read N- to C-terminus: ATP synthase subunit gamma, chloroplastic (118 aa).

An intrachain disulfide couples Cys-30 to Cys-36.

The protein belongs to the ATPase gamma chain family. F-type ATPases have 2 components, CF(1) - the catalytic core - and CF(0) - the membrane proton channel. CF(1) has five subunits: alpha(3), beta(3), gamma(1), delta(1), epsilon(1). CF(0) has four main subunits: a, b, b' and c.

It localises to the plastid. The protein localises to the chloroplast thylakoid membrane. Produces ATP from ADP in the presence of a proton gradient across the membrane. The gamma chain is believed to be important in regulating ATPase activity and the flow of protons through the CF(0) complex. Its function is as follows. Inceptin is a proteolytic fragment produced by insect larvae that previously ingested the protein. This peptide mediate plant perception of herbivory through the induction of volatile, phenylpropanoid and protease inhibitor defenses such as ethylene, jasmonic acid and salicylic acid for example. The polypeptide is ATP synthase subunit gamma, chloroplastic (Vigna unguiculata (Cowpea)).